Here is a 257-residue protein sequence, read N- to C-terminus: Hydroxyacylglutathione hydrolase (257 aa).

Residues His-54, His-56, Asp-58, His-59, His-113, Asp-137, and His-175 each coordinate Zn(2+).

This sequence belongs to the metallo-beta-lactamase superfamily. Glyoxalase II family. Monomer. Zn(2+) serves as cofactor.

It catalyses the reaction an S-(2-hydroxyacyl)glutathione + H2O = a 2-hydroxy carboxylate + glutathione + H(+). It functions in the pathway secondary metabolite metabolism; methylglyoxal degradation; (R)-lactate from methylglyoxal: step 2/2. In terms of biological role, thiolesterase that catalyzes the hydrolysis of S-D-lactoyl-glutathione to form glutathione and D-lactic acid. In Microcystis aeruginosa (strain NIES-843 / IAM M-2473), this protein is Hydroxyacylglutathione hydrolase.